The primary structure comprises 39 residues: U2-ctenitoxin-Co1a (39 aa).

Disulfide bonds are present. In terms of tissue distribution, expressed by the venom gland.

It is found in the secreted. Omega-agatoxins are antagonists of voltage-gated calcium channels (Cav). The protein is U2-ctenitoxin-Co1a of Ctenus ornatus (Brazilian spider).